We begin with the raw amino-acid sequence, 348 residues long: 4-hydroxy-2-oxovalerate aldolase 1 (348 aa).

Residues 8-260 enclose the Pyruvate carboxyltransferase domain; sequence ITVHDMTLRD…QTGVDVWAIQ (253 aa). Residue 16–17 participates in substrate binding; it reads RD. Asp17 provides a ligand contact to Mn(2+). His20 acts as the Proton acceptor in catalysis. Residues Ser170 and His199 each coordinate substrate. Mn(2+)-binding residues include His199 and His201. Tyr290 is a substrate binding site.

The protein belongs to the 4-hydroxy-2-oxovalerate aldolase family.

It catalyses the reaction (S)-4-hydroxy-2-oxopentanoate = acetaldehyde + pyruvate. The sequence is that of 4-hydroxy-2-oxovalerate aldolase 1 from Cupriavidus metallidurans (strain ATCC 43123 / DSM 2839 / NBRC 102507 / CH34) (Ralstonia metallidurans).